The chain runs to 936 residues: Protocadherin alpha-5 (936 aa).

The first 28 residues, methionine 1–glycine 28, serve as a signal peptide directing secretion. The Extracellular portion of the chain corresponds to glutamine 29–asparagine 696. Cadherin domains lie at serine 33–phenylalanine 132, alanine 156–phenylalanine 241, aspartate 242–methionine 349, alanine 350–phenylalanine 454, alanine 455–leucine 564, and valine 580–alanine 677. 3 N-linked (GlcNAc...) asparagine glycosylation sites follow: asparagine 264, asparagine 448, and asparagine 547. A helical transmembrane segment spans residues valine 697 to tyrosine 717. Residues threonine 718 to glutamine 936 are Cytoplasmic-facing. Disordered stretches follow at residues serine 759–arginine 793, arginine 815–isoleucine 875, and glutamine 887–glutamine 936. PXXP repeat units follow at residues proline 773 to proline 776, proline 785 to proline 788, proline 818 to proline 821, lysine 873 to isoleucine 876, and proline 877 to alanine 890. The 5 X 4 AA repeats of P-X-X-P stretch occupies residues proline 773 to alanine 890. Positions serine 774–arginine 786 are enriched in polar residues. Over residues aspartate 895–lysine 909 the composition is skewed to basic and acidic residues.

The protein resides in the cell membrane. Functionally, potential calcium-dependent cell-adhesion protein. May be involved in the establishment and maintenance of specific neuronal connections in the brain. This chain is Protocadherin alpha-5 (PCDHA5), found in Pan troglodytes (Chimpanzee).